Consider the following 245-residue polypeptide: Small ribosomal subunit protein uS2 (245 aa).

The protein belongs to the universal ribosomal protein uS2 family.

The chain is Small ribosomal subunit protein uS2 from Dehalococcoides mccartyi (strain ATCC BAA-2266 / KCTC 15142 / 195) (Dehalococcoides ethenogenes (strain 195)).